The primary structure comprises 93 residues: MAQGEFKKKKNSSANKGGRVTKHSKNPKKGARYCAPRRAAAIKDHTINANITKTLNVRNEKLIAGIASQQVGKLTITKALGEAGAKELKEGKH.

Positions 1-32 (MAQGEFKKKKNSSANKGGRVTKHSKNPKKGAR) are disordered. Positions 19–31 (RVTKHSKNPKKGA) are enriched in basic residues.

It belongs to the UPF0390 family.

This Schizosaccharomyces pombe (strain 972 / ATCC 24843) (Fission yeast) protein is UPF0390 protein C24B10.18.